Consider the following 194-residue polypeptide: Imidazoleglycerol-phosphate dehydratase (194 aa).

The protein belongs to the imidazoleglycerol-phosphate dehydratase family.

The protein resides in the cytoplasm. The catalysed reaction is D-erythro-1-(imidazol-4-yl)glycerol 3-phosphate = 3-(imidazol-4-yl)-2-oxopropyl phosphate + H2O. Its pathway is amino-acid biosynthesis; L-histidine biosynthesis; L-histidine from 5-phospho-alpha-D-ribose 1-diphosphate: step 6/9. This chain is Imidazoleglycerol-phosphate dehydratase, found in Thermoanaerobacter sp. (strain X514).